The primary structure comprises 23 residues: M-poneritoxin-Nc1a (23 aa).

The protein belongs to the non-disulfide-bridged peptide (NDBP) superfamily. Medium-length antimicrobial peptide (group 3) family. Ponericin-W subfamily. In terms of tissue distribution, expressed by the venom gland.

The protein resides in the secreted. It is found in the target cell membrane. Membrane-perturbating peptide with multiple activities. It is insecticidal, since it induces contractile paralysis in insects (L.cuprina) during several hours, and death after 24 hours. It shows antibacterial activity with higher activity against Gram-positive than Gram-negative bacteria. It is also antiparasitic, since it potently inhibits the larval development of the major pathogenic nematode of ruminants (H.contortus, IC(50)=5.1 uM), but fails to reduce the motility of adult males of the other nematode B.malayi. It also shows cytotoxic activity against HEK293 cells (EC(50)=12-14 uM) and induces hemolysis in human erythrocytes (EC(50)=28.6-48.2 uM). In addition, it causes an important increase in intracellular calcium concentration on neuronal and epithelial cell lines, which supports a non-specific membrane perturbation mechanism of action. In vivo, it induces pain by intraplantar injection into mice, suggesting a defensive function against vertebrate predators. The polypeptide is M-poneritoxin-Nc1a (Neoponera commutata (Large hunting ant)).